The following is a 706-amino-acid chain: Mitochondrial intermediate peptidase, mitochondrial (706 aa).

Residues 1 to 29 (MWKLTRRLQPHINSTRWLVRNFRNGGAGD) constitute a mitochondrion transit peptide. Residues 212–238 (NPTYRSTSGGSRGSTRSAHKSKQKGFR) are disordered. Residues 214–227 (TYRSTSGGSRGSTR) are compositionally biased toward low complexity. Histidine 491 contacts Zn(2+). Residue glutamate 492 is part of the active site. Zn(2+) is bound by residues histidine 495 and glutamate 520.

This sequence belongs to the peptidase M3 family. It depends on Zn(2+) as a cofactor.

It is found in the mitochondrion. Aminopeptidase which cleaves preproteins, imported into the mitochondrion, to their mature size. Could cleave both preproteins and preprotein intermediates already cleaved by the mitochondrial processing peptidase (MPP). In Arabidopsis thaliana (Mouse-ear cress), this protein is Mitochondrial intermediate peptidase, mitochondrial.